A 216-amino-acid polypeptide reads, in one-letter code: Cyclic AMP receptor protein (216 aa).

6-126 (LFHGLAPEEV…HNLAALLARR (121 aa)) lines the a nucleoside 3',5'-cyclic phosphate pocket. 3',5'-cyclic AMP-binding positions include 75-78 (GEMS) and 85-86 (RS). An HTH crp-type domain is found at 140–206 (EEARNRVAYA…PGTVEVREAA (67 aa)). A DNA-binding region (H-T-H motif) is located at residues 166-185 (HHELAALAGTSRETVSRVLH).

As to quaternary structure, homodimer.

Functionally, activates transcription. Positively regulates six promoters upstream of the TTHB186, TTHB147, TTHB178, TTHB159, TTHA0771 and TTHA0176 genes in a cAMP-dependent manner. Regulated genes include clustered regularly interspaced short palindromic repeat (CRISPR) associated (Cas) genes, and the genes encoding a putative transcriptional regulator, a protein containing the exonuclease III-like domain of DNA polymerase, a GCN5-related acetyltransferase homolog, and some T.thermophilus-specific proteins of unknown function. The consensus DNA-binding site of this transcriptional regulator is 5'-(CT)NNG(G/T)(G/T)C(A/C)N(A/T)NNTCACAN(G/C)(G/C)-3' in which N is G, A, T or C. This is Cyclic AMP receptor protein from Thermus thermophilus (strain ATCC 27634 / DSM 579 / HB8).